A 258-amino-acid chain; its full sequence is Alcohol dehydrogenase 2 (258 aa).

9 to 33 (IFVGGLGFIGYEACKQLMAKNMASF) provides a ligand contact to NAD(+). A substrate-binding site is contributed by S137. The Proton acceptor role is filled by Y150.

This sequence belongs to the short-chain dehydrogenases/reductases (SDR) family. Homodimer.

It catalyses the reaction a primary alcohol + NAD(+) = an aldehyde + NADH + H(+). It carries out the reaction a secondary alcohol + NAD(+) = a ketone + NADH + H(+). In Ceratitis rosa (Natal fruit fly), this protein is Alcohol dehydrogenase 2 (ADH2).